Here is a 254-residue protein sequence, read N- to C-terminus: Pyridoxine 5'-phosphate synthase (254 aa).

Asn-12 is a 3-amino-2-oxopropyl phosphate binding site. 14 to 15 (DH) contributes to the 1-deoxy-D-xylulose 5-phosphate binding site. Position 23 (Arg-23) interacts with 3-amino-2-oxopropyl phosphate. Catalysis depends on His-48, which acts as the Proton acceptor. 1-deoxy-D-xylulose 5-phosphate contacts are provided by Arg-50 and His-55. Glu-75 functions as the Proton acceptor in the catalytic mechanism. Position 105 (Thr-105) interacts with 1-deoxy-D-xylulose 5-phosphate. His-199 (proton donor) is an active-site residue. 3-amino-2-oxopropyl phosphate-binding positions include Gly-200 and 221–222 (GF).

The protein belongs to the PNP synthase family. As to quaternary structure, homooctamer; tetramer of dimers.

It localises to the cytoplasm. It carries out the reaction 3-amino-2-oxopropyl phosphate + 1-deoxy-D-xylulose 5-phosphate = pyridoxine 5'-phosphate + phosphate + 2 H2O + H(+). The protein operates within cofactor biosynthesis; pyridoxine 5'-phosphate biosynthesis; pyridoxine 5'-phosphate from D-erythrose 4-phosphate: step 5/5. Catalyzes the complicated ring closure reaction between the two acyclic compounds 1-deoxy-D-xylulose-5-phosphate (DXP) and 3-amino-2-oxopropyl phosphate (1-amino-acetone-3-phosphate or AAP) to form pyridoxine 5'-phosphate (PNP) and inorganic phosphate. The sequence is that of Pyridoxine 5'-phosphate synthase from Rhodopseudomonas palustris (strain ATCC BAA-98 / CGA009).